The sequence spans 485 residues: NADH-quinone oxidoreductase subunit N (485 aa).

A run of 14 helical transmembrane segments spans residues 8–28, 35–55, 75–95, 105–125, 127–147, 159–179, 203–223, 235–255, 271–291, 297–317, 326–346, 374–394, 407–426, and 449–469; these read LIALSPLLIVGLTVVVVMLCI, FVNATMTVIGLNIALLSLYFV, FYTGLVLLASLATSTFAYPWL, FYLLVLIAALGGILLSSANHL, SLFIGIELLSLPLFGLVGYAF, YMLLSAAASSFLLFGMALIYA, LLAGLGMMIVGLGFKLSLVPF, PAPVSTFLATAGKIAVFGAVM, IVLSIIAFASIMFGNVMAVSQ, LLGYSSIAHLGYLLVALIAVQ, VGVYLVGYLFSSLGAFGVVSL, AVMTVMMLSLAGIPMTLGFFG, LWWLTGAVVLGSAIGLYYYL, and ALTAGGVVVLISSIVVLFFGL.

This sequence belongs to the complex I subunit 2 family. As to quaternary structure, NDH-1 is composed of 13 different subunits. Subunits NuoA, H, J, K, L, M, N constitute the membrane sector of the complex.

Its subcellular location is the cell inner membrane. The enzyme catalyses a quinone + NADH + 5 H(+)(in) = a quinol + NAD(+) + 4 H(+)(out). Its function is as follows. NDH-1 shuttles electrons from NADH, via FMN and iron-sulfur (Fe-S) centers, to quinones in the respiratory chain. The immediate electron acceptor for the enzyme in this species is believed to be ubiquinone. Couples the redox reaction to proton translocation (for every two electrons transferred, four hydrogen ions are translocated across the cytoplasmic membrane), and thus conserves the redox energy in a proton gradient. The polypeptide is NADH-quinone oxidoreductase subunit N (Pectobacterium atrosepticum (strain SCRI 1043 / ATCC BAA-672) (Erwinia carotovora subsp. atroseptica)).